The following is a 422-amino-acid chain: Histidine--tRNA ligase (422 aa).

The protein belongs to the class-II aminoacyl-tRNA synthetase family. Homodimer.

Its subcellular location is the cytoplasm. It carries out the reaction tRNA(His) + L-histidine + ATP = L-histidyl-tRNA(His) + AMP + diphosphate + H(+). This chain is Histidine--tRNA ligase (hisS), found in Photobacterium profundum (strain SS9).